The following is a 159-amino-acid chain: Phosphopantetheine adenylyltransferase (159 aa).

Thr9 lines the substrate pocket. ATP contacts are provided by residues Thr9–Phe10 and His17. Lys41, Leu73, and Arg87 together coordinate substrate. ATP is bound by residues Gly88–Arg90, Glu98, and Tyr123–Thr129.

The protein belongs to the bacterial CoaD family. As to quaternary structure, homohexamer. It depends on Mg(2+) as a cofactor.

It is found in the cytoplasm. The catalysed reaction is (R)-4'-phosphopantetheine + ATP + H(+) = 3'-dephospho-CoA + diphosphate. The protein operates within cofactor biosynthesis; coenzyme A biosynthesis; CoA from (R)-pantothenate: step 4/5. Reversibly transfers an adenylyl group from ATP to 4'-phosphopantetheine, yielding dephospho-CoA (dPCoA) and pyrophosphate. In Pseudomonas putida (strain ATCC 700007 / DSM 6899 / JCM 31910 / BCRC 17059 / LMG 24140 / F1), this protein is Phosphopantetheine adenylyltransferase.